Reading from the N-terminus, the 213-residue chain is Large ribosomal subunit protein uL1 (213 aa).

Belongs to the universal ribosomal protein uL1 family. As to quaternary structure, part of the 50S ribosomal subunit.

Binds directly to 23S rRNA. Probably involved in E site tRNA release. In terms of biological role, protein L1 is also a translational repressor protein, it controls the translation of its operon by binding to its mRNA. This Methanocella arvoryzae (strain DSM 22066 / NBRC 105507 / MRE50) protein is Large ribosomal subunit protein uL1.